A 599-amino-acid chain; its full sequence is UvrABC system protein C (599 aa).

In terms of domain architecture, GIY-YIG spans 15-93; sequence DNPGVYQYYD…IKTLQPRYNI (79 aa). One can recognise a UVR domain in the interval 207–242; sequence KDSMKDFKKVMTNLAQNMHFEEAQKIKEKIEILENY.

It belongs to the UvrC family. In terms of assembly, interacts with UvrB in an incision complex.

Its subcellular location is the cytoplasm. Functionally, the UvrABC repair system catalyzes the recognition and processing of DNA lesions. UvrC both incises the 5' and 3' sides of the lesion. The N-terminal half is responsible for the 3' incision and the C-terminal half is responsible for the 5' incision. The sequence is that of UvrABC system protein C from Flavobacterium psychrophilum (strain ATCC 49511 / DSM 21280 / CIP 103535 / JIP02/86).